A 246-amino-acid chain; its full sequence is NLP effector protein Pc118548 (246 aa).

The N-terminal stretch at Met-1–Ala-19 is a signal peptide. Positions Gly-122–Glu-128 match the Hepta-peptide GHRHDWE motif motif. A glycan (N-linked (GlcNAc...) asparagine) is linked at Asn-141.

It belongs to the Necrosis inducing protein (NPP1) family.

It localises to the secreted. Secreted effector that contributes strongly to virulence during infection by P.capsici. Induces cell death in the Solanaceae, including Nicotiana benthamiana and hot pepper. This Phytophthora capsici protein is NLP effector protein Pc118548.